Consider the following 221-residue polypeptide: H-2 class II histocompatibility antigen, A-Q alpha chain (221 aa).

The interval Gly1–Asn76 is alpha-1. The Extracellular portion of the chain corresponds to Gly1–Glu183. Residues Glu77–Trp170 are alpha-2. Residues Pro79–Glu171 form the Ig-like C1-type domain. A disulfide bridge links Cys99 with Cys155. A glycan (N-linked (GlcNAc...) asparagine) is linked at Asn110. Positions Glu171–Glu183 are connecting peptide. The helical transmembrane segment at Thr184–Leu209 threads the bilayer. Topologically, residues Arg210–Leu221 are cytoplasmic.

This sequence belongs to the MHC class II family.

Its subcellular location is the membrane. The polypeptide is H-2 class II histocompatibility antigen, A-Q alpha chain (H2-Aa) (Mus musculus (Mouse)).